We begin with the raw amino-acid sequence, 282 residues long: NADPH-dependent 7-cyano-7-deazaguanine reductase (282 aa).

Residue Ile82 to Ser84 participates in substrate binding. Ser84 to Lys85 contacts NADPH. Cys189 (thioimide intermediate) is an active-site residue. The Proton donor role is filled by Asp196. His228 to Glu229 is a substrate binding site. An NADPH-binding site is contributed by Arg257–Gly258.

It belongs to the GTP cyclohydrolase I family. QueF type 2 subfamily. In terms of assembly, homodimer.

The protein localises to the cytoplasm. The enzyme catalyses 7-aminomethyl-7-carbaguanine + 2 NADP(+) = 7-cyano-7-deazaguanine + 2 NADPH + 3 H(+). Its pathway is tRNA modification; tRNA-queuosine biosynthesis. In terms of biological role, catalyzes the NADPH-dependent reduction of 7-cyano-7-deazaguanine (preQ0) to 7-aminomethyl-7-deazaguanine (preQ1). This is NADPH-dependent 7-cyano-7-deazaguanine reductase from Delftia acidovorans (strain DSM 14801 / SPH-1).